The chain runs to 607 residues: Chaperone protein DnaK (607 aa).

At Thr174 the chain carries Phosphothreonine; by autocatalysis. Residues 577–594 are compositionally biased toward polar residues; that stretch reads QSAGSTAGNPGQGQSTEN. Residues 577 to 607 are disordered; sequence QSAGSTAGNPGQGQSTENPGGKTIDGDYKVN.

Belongs to the heat shock protein 70 family.

Its function is as follows. Acts as a chaperone. This is Chaperone protein DnaK from Dictyoglomus turgidum (strain DSM 6724 / Z-1310).